The chain runs to 376 residues: cAMP-dependent protein kinase type I regulatory subunit (376 aa).

The dimerization and phosphorylation stretch occupies residues 1–131 (MSYMMAKTLE…ALSKAIAKNV (131 aa)). The segment at 72–93 (PDDCEDLSPMPQTAAPPVRRRG) is disordered. Residues 91 to 95 (RRGGI) carry the Pseudophosphorylation motif motif. Position 96 is a phosphoserine (S96). 3',5'-cyclic AMP contacts are provided by residues 132-247 (LFAH…FLSR), E197, R206, 250-371 (ILES…YNSF), E321, and R330.

This sequence belongs to the cAMP-dependent kinase regulatory chain family. Tetramer, composed of 2 regulatory (R) and 2 catalytic (C) subunits. In the presence of cAMP it dissociates into 2 active monomeric C subunits and an R dimer. The pseudophosphorylation site binds to the substrate-binding region of the catalytic chain but is not phosphorylated. The physiological significance of phosphorylations by other kinases is unclear.

In Drosophila melanogaster (Fruit fly), this protein is cAMP-dependent protein kinase type I regulatory subunit (Pka-R1).